A 432-amino-acid chain; its full sequence is MVNEQIIDISGPLKGEIEVPGDKSMTHRAIMLASLAEGVSTIYKPLLGEDCRRTMDIFRLLGVEIKEDDEKLVVTSPGYQSFNTPHQVLYTGNSGTTTRLLAGLLSGLGIESVLSGDVSIGKRPMDRVLRPLKSMNANIEGIEDNYTPLIIKPSVIKGINYKMEVASAQVKSAILFASLFSKEATIIKELDVSRNHTETMFRHFNIPIEAEGLSITTTPEAIRYIKPADFHVPGDISSAAFFIVAALITPGSDVTIHNVGINPTRSGIIDIVEKMGGNIQLFNQTTGAEPTASIRIQYTPMLQPITIEGELVPKAIDELPVIALLCTQAVGTSTIKDAEELKVKETNRIDTTADMLNLLGFELQPTNDGLIIHPSEFKTNATVDSLTDHRIGMMLAVASLLSSEPVKIKQFDAVNVSFPGFLPKLKLLENEG.

Positions 23, 24, and 28 each coordinate 3-phosphoshikimate. Residue Lys23 participates in phosphoenolpyruvate binding. Gly95 and Arg123 together coordinate phosphoenolpyruvate. 3-phosphoshikimate-binding residues include Ser167, Gln169, Asp317, and Lys344. Gln169 is a phosphoenolpyruvate binding site. Catalysis depends on Asp317, which acts as the Proton acceptor. Phosphoenolpyruvate is bound by residues Arg348 and Arg390.

The protein belongs to the EPSP synthase family. Monomer.

It is found in the cytoplasm. It catalyses the reaction 3-phosphoshikimate + phosphoenolpyruvate = 5-O-(1-carboxyvinyl)-3-phosphoshikimate + phosphate. It participates in metabolic intermediate biosynthesis; chorismate biosynthesis; chorismate from D-erythrose 4-phosphate and phosphoenolpyruvate: step 6/7. Functionally, catalyzes the transfer of the enolpyruvyl moiety of phosphoenolpyruvate (PEP) to the 5-hydroxyl of shikimate-3-phosphate (S3P) to produce enolpyruvyl shikimate-3-phosphate and inorganic phosphate. This is 3-phosphoshikimate 1-carboxyvinyltransferase from Staphylococcus aureus (strain bovine RF122 / ET3-1).